Consider the following 457-residue polypeptide: PDZ and LIM domain protein 7 (457 aa).

Positions 1 to 85 (MDSFKVVLEG…RLSLGLSRAQ (85 aa)) constitute a PDZ domain. The residue at position 78 (Ser-78) is a Phosphoserine. Disordered stretches follow at residues 81-132 (LSRA…LSQN) and 186-226 (FMKK…PWAV). Thr-96 is subject to Phosphothreonine. Asymmetric dimethylarginine is present on Arg-103. Residue Ser-111 is modified to Phosphoserine. Ser-247 carries the phosphoserine modification. 3 LIM zinc-binding domains span residues 280-338 (PVCH…VRYA), 339-398 (PSCA…MFGT), and 399-457 (KCRG…FSHV).

As to quaternary structure, binds via its LIM zinc-binding 3 domain (LIM 3) domain to endocytic codes of INSR, but not with those of IGF1R, LDLR, TFRC, or EGFR. Interacts with various PKC isoforms through the LIM zinc-binding domains. Binds to RET in a phosphorylation-independent manner via its LIM zinc-binding 2 domain (LIM 2). Probably part of a complex with SHC and the RET dimer. Interacts with TPM2, TBX4 and TBX5. Interacts (via LIM domains) with SIPA1L1. As to expression, expressed in kidney, heart, brain, lung, and skeletal muscle. Overexpression results in the synthesis of an unidentified soluble factor which acts on cells in the osteoblast lineage causing them to differentiate and secrete BMP-2.

It is found in the cytoplasm. Its subcellular location is the cytoskeleton. Functionally, may function as a scaffold on which the coordinated assembly of proteins can occur. May play a role as an adapter that, via its PDZ domain, localizes LIM-binding proteins to actin filaments of both skeletal muscle and nonmuscle tissues. Involved in both of the two fundamental mechanisms of bone formation, direct bone formation (e.g. embryonic flat bones mandible and cranium), and endochondral bone formation (e.g. embryonic long bone development). Plays a role during fracture repair. Involved in BMP6 signaling pathway. The polypeptide is PDZ and LIM domain protein 7 (Pdlim7) (Rattus norvegicus (Rat)).